Consider the following 1088-residue polypeptide: RNA-directed RNA polymerase (1088 aa).

The RdRp catalytic domain occupies 501 to 687 (LSYGDVTRFL…AKRYIAGGKI (187 aa)).

Belongs to the reoviridae RNA-directed RNA polymerase family. Interacts with VP3 (Potential). Interacts with VP2; this interaction activates VP1. Interacts with NSP5; this interaction is probably necessary for the formation of functional virus factories. Interacts with NSP2; this interaction is weak. It depends on Mg(2+) as a cofactor.

It is found in the virion. The catalysed reaction is RNA(n) + a ribonucleoside 5'-triphosphate = RNA(n+1) + diphosphate. Functionally, RNA-directed RNA polymerase that is involved in both transcription and genome replication. Together with VP3 capping enzyme, forms an enzyme complex positioned near the channels situated at each of the five-fold vertices of the core. Following infection, the outermost layer of the virus is lost, leaving a double-layered particle (DLP) made up of the core and VP6 shell. VP1 then catalyzes the transcription of fully conservative plus-strand genomic RNAs that are extruded through the DLP's channels into the cytoplasm where they function as mRNAs for translation of viral proteins. One copy of each of the viral (+)RNAs is also recruited during core assembly, together with newly synthesized polymerase complexes and VP2. The polymerase of these novo-formed particles catalyzes the synthesis of complementary minus-strands leading to dsRNA formation. To do so, the polymerase specifically recognizes and binds 4 bases 5'-UGUG-3' in the conserved 3'-sequence of plus-strand RNA templates. VP2 presumably activates the autoinhibited VP1-RNA complex to coordinate packaging and genome replication. Once dsRNA synthesis is complete, the polymerase switches to the transcriptional mode, thus providing secondary transcription. The sequence is that of RNA-directed RNA polymerase from Homo sapiens (Human).